The chain runs to 178 residues: ATP-dependent protease subunit HslV (178 aa).

Thr-7 is an active-site residue. Gly-162, Cys-165, and Thr-168 together coordinate Na(+).

The protein belongs to the peptidase T1B family. HslV subfamily. As to quaternary structure, a double ring-shaped homohexamer of HslV is capped on each side by a ring-shaped HslU homohexamer. The assembly of the HslU/HslV complex is dependent on binding of ATP.

Its subcellular location is the cytoplasm. It catalyses the reaction ATP-dependent cleavage of peptide bonds with broad specificity.. Its activity is regulated as follows. Allosterically activated by HslU binding. Protease subunit of a proteasome-like degradation complex believed to be a general protein degrading machinery. The chain is ATP-dependent protease subunit HslV from Burkholderia multivorans (strain ATCC 17616 / 249).